A 372-amino-acid chain; its full sequence is Histidine protein methyltransferase 1 homolog (372 aa).

2 disordered regions span residues 30–55 (SKEL…QFDL) and 68–103 (NAAP…AKEH). A compositionally biased stretch (basic and acidic residues) spans 39 to 49 (QKGEERDRKCS). Over residues 70-87 (APSQDTDSPLSAASSSRN) the composition is skewed to polar residues. Residues Ser-72 and Ser-77 each carry the phosphoserine modification. Tele-methylhistidine; by autocatalysis is present on His-154. S-adenosyl-L-methionine is bound by residues 168–172 (IWECT), Gly-195, and 216–218 (QDY). The Nuclear localization signal motif lies at 247–253 (PDVKRCR). Residues 268-270 (GEW) and Ser-293 each bind S-adenosyl-L-methionine.

This sequence belongs to the methyltransferase superfamily. METTL18 family. Interacts with GRWD1 and members of the heat shock protein 90 and 70 families; these proteins may possibly be methylation substrates for the enzyme. Post-translationally, monomethylated at His-154 through automethylation. Automethylation at His-154 positively regulates the methyltransferase activity toward RPL3. Probably methylated on other residues.

The protein resides in the cytoplasm. It localises to the cytosol. Its subcellular location is the nucleus. It is found in the nucleolus. The enzyme catalyses L-histidyl-[protein] + S-adenosyl-L-methionine = N(tele)-methyl-L-histidyl-[protein] + S-adenosyl-L-homocysteine + H(+). Functionally, protein-L-histidine N-tele-methyltransferase that specifically monomethylates RPL3, thereby regulating translation elongation. Histidine methylation of RPL3 regulates translation elongation by slowing ribosome traversal on tyrosine codons: slower elongation provides enough time for proper folding of synthesized proteins and prevents cellular aggregation of tyrosine-rich proteins. The sequence is that of Histidine protein methyltransferase 1 homolog from Homo sapiens (Human).